Here is a 138-residue protein sequence, read N- to C-terminus: Acidic phospholipase A2 1 (138 aa).

An N-terminal signal peptide occupies residues 1–16 (MRTLWIMAVLLVGVEG). Cystine bridges form between C42–C131, C44–C60, C59–C111, C65–C138, C66–C104, C73–C97, and C91–C102. Ca(2+) is bound by residues F43, G45, and G47. The active site involves H63. Ca(2+) is bound at residue D64. Residue D105 is part of the active site.

It belongs to the phospholipase A2 family. Group II subfamily. D49 sub-subfamily. Ca(2+) is required as a cofactor. In terms of tissue distribution, expressed by the venom gland.

It is found in the secreted. The enzyme catalyses a 1,2-diacyl-sn-glycero-3-phosphocholine + H2O = a 1-acyl-sn-glycero-3-phosphocholine + a fatty acid + H(+). In terms of biological role, snake venom phospholipase A2 (PLA2) that has high lipolytic activity. PLA2 catalyzes the calcium-dependent hydrolysis of the 2-acyl groups in 3-sn-phosphoglycerides. This chain is Acidic phospholipase A2 1, found in Craspedocephalus gramineus (Bamboo pit viper).